A 1173-amino-acid chain; its full sequence is RNA polymerase-associated protein CTR9 homolog (1173 aa).

TPR repeat units follow at residues 41-75 (LHIW…NLDY), 129-162 (NHLL…SPNN), 163-196 (IPAL…NPGC), 198-231 (AEVR…NSKC), 235-268 (LVGL…DPSN), 306-339 (AESC…ASSS), 341-374 (VLPF…YPNN), 412-444 (VEAW…LQEK), 451-484 (PEIL…AKAE), 497-530 (VTTS…HPNY), 531-564 (VDCY…NQDH), 566-598 (DAWS…PATQ), 613-646 (QTLH…DAKN), 647-680 (LYAA…TADI), 681-714 (SDVW…FYKH), and 717-750 (TEVV…APSD). The interval 892–1173 (TGETEATKEK…GSEHGSDDSD (282 aa)) is disordered. Basic residues predominate over residues 900-912 (EKKRGGGGGRRSK). Acidic residues predominate over residues 917-929 (FDEFVNDDTDDDL). Position 925 is a phosphothreonine (Thr-925). 4 positions are modified to phosphoserine: Ser-932, Ser-941, Ser-943, and Ser-970. The span at 980-994 (KPKKRRPPRAEKKKA) shows a compositional bias: basic residues. 2 positions are modified to phosphoserine: Ser-1020 and Ser-1021. Residues 1023–1034 (EDKLKIADEGHP) are compositionally biased toward basic and acidic residues. Phosphoserine is present on residues Ser-1037, Ser-1039, Ser-1041, Ser-1079, Ser-1083, Ser-1085, Ser-1095, and Ser-1100. Residues 1097–1128 (SEQSDNESVQSGRSPSGASENENDSRPASPSA) show a composition bias toward polar residues. Low complexity predominate over residues 1137-1159 (GSDNEGSGQGSGNESEPEGSNNE). Basic and acidic residues predominate over residues 1160–1173 (ASDRGSEHGSDDSD).

Component of the PAF1 complex, which consists of CDC73, PAF1, LEO1, CTR9, RTF1 and SKIC8. The PAF1 complex interacts with PHF5A. Interacts with KMT2A/MLL1. Interacts with STAT3. Interacts with SETD5. Interacts with ERCC6. As to expression, widely expressed.

It localises to the nucleus speckle. Component of the PAF1 complex (PAF1C) which has multiple functions during transcription by RNA polymerase II and is implicated in regulation of development and maintenance of embryonic stem cell pluripotency. PAF1C associates with RNA polymerase II through interaction with POLR2A CTD non-phosphorylated and 'Ser-2'- and 'Ser-5'-phosphorylated forms and is involved in transcriptional elongation, acting both independently and synergistically with TCEA1 and in cooperation with the DSIF complex and HTATSF1. PAF1C is required for transcription of Hox and Wnt target genes. PAF1C is involved in hematopoiesis and stimulates transcriptional activity of KMT2A/MLL1. PAF1C is involved in histone modifications such as ubiquitination of histone H2B and methylation on histone H3 'Lys-4' (H3K4me3). PAF1C recruits the RNF20/40 E3 ubiquitin-protein ligase complex and the E2 enzyme UBE2A or UBE2B to chromatin which mediate monoubiquitination of 'Lys-120' of histone H2B (H2BK120ub1); UB2A/B-mediated H2B ubiquitination is proposed to be coupled to transcription. PAF1C is involved in mRNA 3' end formation probably through association with cleavage and poly(A) factors. Required for mono- and trimethylation on histone H3 'Lys-4' (H3K4me3) and dimethylation on histone H3 'Lys-79' (H3K4me3). Required for Hox gene transcription. Required for the trimethylation of histone H3 'Lys-4' (H3K4me3) on genes involved in stem cell pluripotency; this function is synergistic with CXXC1 indicative for an involvement of the SET1 complex. Involved in transcriptional regulation of IL6-responsive genes and in JAK-STAT pathway; may regulate DNA-association of STAT3. In Mus musculus (Mouse), this protein is RNA polymerase-associated protein CTR9 homolog (Ctr9).